The sequence spans 395 residues: Mevalonate kinase (395 aa).

ATP contacts are provided by residues Lys-13, Asn-55, Asn-104, Ser-135, and 140–146; that span reads GAGLGSS. Ser-146 acts as the Proton donor in catalysis. Residues Ser-146 and Glu-193 each coordinate Mg(2+). The Proton acceptor role is filled by Asp-204.

It belongs to the GHMP kinase family. Mevalonate kinase subfamily. In terms of assembly, homodimer. The cofactor is Mg(2+).

Its subcellular location is the cytoplasm. It localises to the peroxisome. It catalyses the reaction (R)-mevalonate + ATP = (R)-5-phosphomevalonate + ADP + H(+). Its pathway is isoprenoid biosynthesis; isopentenyl diphosphate biosynthesis via mevalonate pathway; isopentenyl diphosphate from (R)-mevalonate: step 1/3. With respect to regulation, farnesyl pyrophosphate and geranyl pyrophosphate inhibit mevalonate kinase activity by binding competitively at the ATP-binding sites. In terms of biological role, catalyzes the phosphorylation of mevalonate to mevalonate 5-phosphate, a key step in isoprenoid and cholesterol biosynthesis. This is Mevalonate kinase from Mus musculus (Mouse).